A 320-amino-acid polypeptide reads, in one-letter code: Cytochrome c biogenesis protein CcsA (320 aa).

The next 8 helical transmembrane spans lie at 9–29 (ILIHISFSVVSIVITIYFLTL), 44–64 (GMIVTFFCITGLLAARWIYSG), 71–91 (LYESLIFLSWSFSIIHMVCYF), 99–119 (LNAITGPSAILTQGFATSGLL), 144–164 (MVLGYAALLCGSLLSVALLVI), 226–246 (IISLGFIFLTIGILSGAVWAN), 261–281 (WAFITWTIFAIYLHIRTNINL), and 287–307 (AIVASMGFLIIWICYFGVNLL).

It belongs to the CcmF/CycK/Ccl1/NrfE/CcsA family. As to quaternary structure, may interact with Ccs1.

The protein localises to the plastid. It localises to the chloroplast thylakoid membrane. Required during biogenesis of c-type cytochromes (cytochrome c6 and cytochrome f) at the step of heme attachment. In Carica papaya (Papaya), this protein is Cytochrome c biogenesis protein CcsA.